The primary structure comprises 115 residues: MKRKYILKKESEITAVFRSKKRCGNSSFIIYYSKQNVNTYFKFALSVGKKYGKAHERNLIKRRLRAIIRNYSSNLNPAFFFVIVIKPPAKNLTFQQLKTTFAKFASKINLLLSNN.

Belongs to the RnpA family. As to quaternary structure, consists of a catalytic RNA component (M1 or rnpB) and a protein subunit.

The enzyme catalyses Endonucleolytic cleavage of RNA, removing 5'-extranucleotides from tRNA precursor.. Functionally, RNaseP catalyzes the removal of the 5'-leader sequence from pre-tRNA to produce the mature 5'-terminus. It can also cleave other RNA substrates such as 4.5S RNA. The protein component plays an auxiliary but essential role in vivo by binding to the 5'-leader sequence and broadening the substrate specificity of the ribozyme. The polypeptide is Ribonuclease P protein component (Phytoplasma australiense).